Here is a 115-residue protein sequence, read N- to C-terminus: uncharacterized protein (115 aa).

A signal peptide spans 1–26 (MNFKKTVVSALSISALALSVSGVASA). Residues 36–114 (VKNISISPTH…AVFGKVYVTV (79 aa)) enclose the BIG2 domain.

This is an uncharacterized protein from Bacillus subtilis (strain 168).